Here is a 197-residue protein sequence, read N- to C-terminus: Probable molybdenum cofactor guanylyltransferase (197 aa).

GTP-binding positions include 9–11, K21, D65, and D94; that span reads LAG. D94 lines the Mg(2+) pocket.

It belongs to the MobA family. Mg(2+) is required as a cofactor.

It is found in the cytoplasm. The catalysed reaction is Mo-molybdopterin + GTP + H(+) = Mo-molybdopterin guanine dinucleotide + diphosphate. Transfers a GMP moiety from GTP to Mo-molybdopterin (Mo-MPT) cofactor (Moco or molybdenum cofactor) to form Mo-molybdopterin guanine dinucleotide (Mo-MGD) cofactor. The polypeptide is Probable molybdenum cofactor guanylyltransferase (Carboxydothermus hydrogenoformans (strain ATCC BAA-161 / DSM 6008 / Z-2901)).